The sequence spans 229 residues: Cytochrome c oxidase subunit 2 (229 aa).

At 1–14 the chain is on the mitochondrial intermembrane side; it reads MANPSQFGFQDASS. The helical transmembrane segment at 15-45 threads the bilayer; sequence PIMEELVEFHDHALMVALAICSLVLYLLALM. Over 46-58 the chain is Mitochondrial matrix; that stretch reads LVEKLSSNTVDAQ. A helical membrane pass occupies residues 59–86; sequence EVELIWTILPAIVLILLALPSLQILYMM. At 87–229 the chain is on the mitochondrial intermembrane side; it reads DEIDEPDLTL…SWSSLLSTDS (143 aa). Cu cation-binding residues include His160, Cys195, Glu197, Cys199, His203, and Met206. Position 197 (Glu197) interacts with Mg(2+).

It belongs to the cytochrome c oxidase subunit 2 family. In terms of assembly, component of the cytochrome c oxidase (complex IV, CIV), a multisubunit enzyme composed of 14 subunits. The complex is composed of a catalytic core of 3 subunits MT-CO1, MT-CO2 and MT-CO3, encoded in the mitochondrial DNA, and 11 supernumerary subunits COX4I, COX5A, COX5B, COX6A, COX6B, COX6C, COX7A, COX7B, COX7C, COX8 and NDUFA4, which are encoded in the nuclear genome. The complex exists as a monomer or a dimer and forms supercomplexes (SCs) in the inner mitochondrial membrane with NADH-ubiquinone oxidoreductase (complex I, CI) and ubiquinol-cytochrome c oxidoreductase (cytochrome b-c1 complex, complex III, CIII), resulting in different assemblies (supercomplex SCI(1)III(2)IV(1) and megacomplex MCI(2)III(2)IV(2)). Found in a complex with TMEM177, COA6, COX18, COX20, SCO1 and SCO2. Interacts with TMEM177 in a COX20-dependent manner. Interacts with COX20. Interacts with COX16. The cofactor is Cu cation.

The protein resides in the mitochondrion inner membrane. The catalysed reaction is 4 Fe(II)-[cytochrome c] + O2 + 8 H(+)(in) = 4 Fe(III)-[cytochrome c] + 2 H2O + 4 H(+)(out). Functionally, component of the cytochrome c oxidase, the last enzyme in the mitochondrial electron transport chain which drives oxidative phosphorylation. The respiratory chain contains 3 multisubunit complexes succinate dehydrogenase (complex II, CII), ubiquinol-cytochrome c oxidoreductase (cytochrome b-c1 complex, complex III, CIII) and cytochrome c oxidase (complex IV, CIV), that cooperate to transfer electrons derived from NADH and succinate to molecular oxygen, creating an electrochemical gradient over the inner membrane that drives transmembrane transport and the ATP synthase. Cytochrome c oxidase is the component of the respiratory chain that catalyzes the reduction of oxygen to water. Electrons originating from reduced cytochrome c in the intermembrane space (IMS) are transferred via the dinuclear copper A center (CU(A)) of subunit 2 and heme A of subunit 1 to the active site in subunit 1, a binuclear center (BNC) formed by heme A3 and copper B (CU(B)). The BNC reduces molecular oxygen to 2 water molecules using 4 electrons from cytochrome c in the IMS and 4 protons from the mitochondrial matrix. The polypeptide is Cytochrome c oxidase subunit 2 (MT-CO2) (Struthio camelus (Common ostrich)).